The following is a 150-amino-acid chain: Large ribosomal subunit protein bL9 (150 aa).

It belongs to the bacterial ribosomal protein bL9 family.

Binds to the 23S rRNA. The polypeptide is Large ribosomal subunit protein bL9 (Methylibium petroleiphilum (strain ATCC BAA-1232 / LMG 22953 / PM1)).